Reading from the N-terminus, the 548-residue chain is Folylpolyglutamate synthase (548 aa).

Position 130–133 (130–133) interacts with ATP; it reads GKGS. Residues Ser-157, Glu-234, and His-262 each contribute to the Mg(2+) site. Positions 382 and 396 each coordinate ATP.

The protein belongs to the folylpolyglutamate synthase family. The cofactor is a monovalent cation.

It is found in the mitochondrion inner membrane. The protein resides in the mitochondrion matrix. It localises to the cytoplasm. It carries out the reaction (6S)-5,6,7,8-tetrahydrofolyl-(gamma-L-Glu)(n) + L-glutamate + ATP = (6S)-5,6,7,8-tetrahydrofolyl-(gamma-L-Glu)(n+1) + ADP + phosphate + H(+). Its pathway is cofactor biosynthesis; tetrahydrofolylpolyglutamate biosynthesis. Its function is as follows. Catalyzes conversion of folates to polyglutamate derivatives allowing concentration of folate compounds in the cell and the intracellular retention of these cofactors, which are important substrates for most of the folate-dependent enzymes that are involved in one-carbon transfer reactions involved in purine, pyrimidine and amino acid synthesis. Required for methionine synthesis and maintenance of intact mitochondrial DNA. Involved in telomere maintenance. The sequence is that of Folylpolyglutamate synthase from Saccharomyces cerevisiae (strain AWRI796) (Baker's yeast).